The chain runs to 150 residues: Large ribosomal subunit protein uL15 (150 aa).

Belongs to the universal ribosomal protein uL15 family. As to quaternary structure, part of the 50S ribosomal subunit.

Functionally, binds to the 23S rRNA. The chain is Large ribosomal subunit protein uL15 from Rickettsia prowazekii (strain Madrid E).